Consider the following 251-residue polypeptide: Long tail fiber protein Gp37 (251 aa).

The interval 134-137 (DVYI) is interaction with the receptor-recognizing protein gp38. Positions 139–237 (SDGRLKINKK…EEIKELKTPF (99 aa)) constitute a Peptidase S74 domain.

This sequence belongs to the S16-like long tail fiber protein Gp37 family. Homotrimer. Interacts with the receptor-recognizing protein Gp38. Proteolytic cleavage and release of the chaperone in the host cytosol stabilizes the folded protein.

It is found in the virion. In terms of biological role, constitues the trimeric tip of the long tail fiber that mediates the attachment to the host receptor, together with the receptor-recognizing protein Gp38. Functionally, the C-terminal chaperone protein mediates homotrimerization and proper folding of the catalytic trimer. This is Long tail fiber protein Gp37 (37) from Escherichia coli (Bacteriophage Ox2).